The following is a 199-amino-acid chain: Putative HMP/thiamine permease protein YkoE (199 aa).

The next 6 helical transmembrane spans lie at 9 to 29 (IVIMSVISIVFAVVYLLFTHF), 40 to 60 (IAYEPIYGIWFIVSVIAAYMI), 63 to 83 (PGAALVSEIIAALVECLLGNP), 85 to 105 (GPMVIVIGIVQGLGAEAVFLA), 114 to 134 (PVLMLAGMGSSVASFIYDLFV), and 143 to 163 (GYLLIMLVIRLISGALLAGLL).

The complex is composed of two ATP-binding proteins (YkoD), two transmembrane proteins (YkoC and YkoE) and a solute-binding protein (YkoF).

It localises to the cell membrane. In terms of biological role, part of the ABC transporter complex YkoCDEF that could transport hydroxymethylpyrimidine (HMP) and/or thiamine. Could also transport other HMP-containing products. Probably responsible for the translocation of the substrate across the membrane. The protein is Putative HMP/thiamine permease protein YkoE (ykoE) of Bacillus subtilis (strain 168).